A 92-amino-acid chain; its full sequence is Small ribosomal subunit protein uS17 (92 aa).

The protein belongs to the universal ribosomal protein uS17 family. In terms of assembly, part of the 30S ribosomal subunit.

Functionally, one of the primary rRNA binding proteins, it binds specifically to the 5'-end of 16S ribosomal RNA. This Cupriavidus metallidurans (strain ATCC 43123 / DSM 2839 / NBRC 102507 / CH34) (Ralstonia metallidurans) protein is Small ribosomal subunit protein uS17.